Consider the following 185-residue polypeptide: MQETADRIADAVAALRRGALLAYPTEAVWGLGCDPDDDAALARLIALKQRDPAKGLILIAGDMDQLEPWLAGLDALQRARLAESWPGPNTWLVPDNGRARPLLRGEHTSLAVRVSDHPLVRQLCAAFGGPLVSSSANRAGEPPAMSAADVRAAFGEAVTLLDGALGGYARPSTIRDLQSGETLRR.

The region spanning 5-185 (ADRIADAVAA…DLQSGETLRR (181 aa)) is the YrdC-like domain.

It belongs to the SUA5 family. TsaC subfamily.

The protein localises to the cytoplasm. It catalyses the reaction L-threonine + hydrogencarbonate + ATP = L-threonylcarbamoyladenylate + diphosphate + H2O. Its function is as follows. Required for the formation of a threonylcarbamoyl group on adenosine at position 37 (t(6)A37) in tRNAs that read codons beginning with adenine. Catalyzes the conversion of L-threonine, HCO(3)(-)/CO(2) and ATP to give threonylcarbamoyl-AMP (TC-AMP) as the acyladenylate intermediate, with the release of diphosphate. This Chromohalobacter salexigens (strain ATCC BAA-138 / DSM 3043 / CIP 106854 / NCIMB 13768 / 1H11) protein is Threonylcarbamoyl-AMP synthase.